The following is a 543-amino-acid chain: Carotenoid 9,10(9',10')-cleavage dioxygenase 1 (543 aa).

Fe cation contacts are provided by H224, H272, H338, and H528.

The protein belongs to the carotenoid oxygenase family. In terms of assembly, homodimer. Fe(2+) serves as cofactor.

It carries out the reaction all-trans-zeaxanthin + 2 O2 = 4,9-dimethyldodeca-2,4,6,8,10-pentaenedial + 2 (3R)-hydroxy-beta-ionone. Cleaves a variety of carotenoids at the 9-10 and 9'-10' double bonds. Probably not involved in abscisic acid biosynthesis. The protein is Carotenoid 9,10(9',10')-cleavage dioxygenase 1 (CCD1) of Phaseolus vulgaris (Kidney bean).